Here is a 386-residue protein sequence, read N- to C-terminus: Ethanolamine kinase 2 (386 aa).

It belongs to the choline/ethanolamine kinase family. Expressed in kidney, liver, ovary, testis and prostate.

The enzyme catalyses ethanolamine + ATP = phosphoethanolamine + ADP + H(+). Its pathway is phospholipid metabolism; phosphatidylethanolamine biosynthesis; phosphatidylethanolamine from ethanolamine: step 1/3. Its function is as follows. Highly specific for ethanolamine phosphorylation. Does not have choline kinase activity. The sequence is that of Ethanolamine kinase 2 (ETNK2) from Homo sapiens (Human).